The chain runs to 63 residues: Putative antitoxin AF_1084 (63 aa).

Belongs to the UPF0165 family.

In terms of biological role, possibly the antitoxin component of a type II toxin-antitoxin (TA) system. The protein is Putative antitoxin AF_1084 of Archaeoglobus fulgidus (strain ATCC 49558 / DSM 4304 / JCM 9628 / NBRC 100126 / VC-16).